Consider the following 460-residue polypeptide: Arginine biosynthesis bifunctional protein ArgJ, chloroplastic (460 aa).

A chloroplast-targeting transit peptide spans 1 to 26 (MYLSVPHYPSLKFTAFQSHKRNFRVF). Substrate is bound by residues threonine 202, lysine 228, threonine 239, glutamate 328, asparagine 455, and threonine 460. Residue threonine 239 is the Nucleophile of the active site.

This sequence belongs to the ArgJ family. Heterodimer of an alpha and a beta chain.

The protein localises to the plastid. Its subcellular location is the chloroplast. It carries out the reaction N(2)-acetyl-L-ornithine + L-glutamate = N-acetyl-L-glutamate + L-ornithine. The enzyme catalyses L-glutamate + acetyl-CoA = N-acetyl-L-glutamate + CoA + H(+). The protein operates within amino-acid biosynthesis; L-arginine biosynthesis; L-ornithine and N-acetyl-L-glutamate from L-glutamate and N(2)-acetyl-L-ornithine (cyclic): step 1/1. Its pathway is amino-acid biosynthesis; L-arginine biosynthesis; N(2)-acetyl-L-ornithine from L-glutamate: step 1/4. Functionally, catalyzes two activities which are involved in the cyclic version of arginine biosynthesis: the synthesis of acetylglutamate from glutamate and acetyl-CoA, and of ornithine by transacetylation between acetylornithine and glutamate. This chain is Arginine biosynthesis bifunctional protein ArgJ, chloroplastic, found in Citrullus lanatus (Watermelon).